A 271-amino-acid chain; its full sequence is Phosphatidylglycerol--prolipoprotein diacylglyceryl transferase (271 aa).

A run of 4 helical transmembrane segments spans residues 25-45 (WYGIMYVIALLLALLLAKFFV), 60-80 (YFIWVEIGVILGARLGYILIY), 103-123 (FVGIRGMSYHGAIIGFLIATL), and 131-151 (ANPWIFLDLVALSVPLAYVFG). R152 contacts a 1,2-diacyl-sn-glycero-3-phospho-(1'-sn-glycerol). A run of 3 helical transmembrane segments spans residues 181–201 (PSQLYEAFLEGIVVFIIVYLA), 209–229 (GELILVYAGAYSLARFICEFY), and 235–255 (GIGFVLWGMSMGQILSFIMFI).

It belongs to the Lgt family.

It is found in the cell inner membrane. It catalyses the reaction L-cysteinyl-[prolipoprotein] + a 1,2-diacyl-sn-glycero-3-phospho-(1'-sn-glycerol) = an S-1,2-diacyl-sn-glyceryl-L-cysteinyl-[prolipoprotein] + sn-glycerol 1-phosphate + H(+). Its pathway is protein modification; lipoprotein biosynthesis (diacylglyceryl transfer). Its function is as follows. Catalyzes the transfer of the diacylglyceryl group from phosphatidylglycerol to the sulfhydryl group of the N-terminal cysteine of a prolipoprotein, the first step in the formation of mature lipoproteins. In Campylobacter jejuni (strain RM1221), this protein is Phosphatidylglycerol--prolipoprotein diacylglyceryl transferase.